The chain runs to 880 residues: Alanine--tRNA ligase (880 aa).

Zn(2+)-binding residues include histidine 567, histidine 571, cysteine 669, and histidine 673.

Belongs to the class-II aminoacyl-tRNA synthetase family. Zn(2+) serves as cofactor.

It localises to the cytoplasm. The enzyme catalyses tRNA(Ala) + L-alanine + ATP = L-alanyl-tRNA(Ala) + AMP + diphosphate. Its function is as follows. Catalyzes the attachment of alanine to tRNA(Ala) in a two-step reaction: alanine is first activated by ATP to form Ala-AMP and then transferred to the acceptor end of tRNA(Ala). Also edits incorrectly charged Ser-tRNA(Ala) and Gly-tRNA(Ala) via its editing domain. This is Alanine--tRNA ligase from Bacillus cereus (strain ZK / E33L).